Reading from the N-terminus, the 363-residue chain is Homeobox protein Hox-A2a (363 aa).

4 disordered regions span residues 30 to 88, 98 to 117, 189 to 220, and 268 to 308; these read DSFQ…LPPE, SKRN…GPVC, RMKH…SDEE, and DKNL…LDVS. Residues 31 to 44 are compositionally biased toward polar residues; that stretch reads SFQSSSIKSSTLSR. Positions 88-93 match the Antp-type hexapeptide motif; it reads EYPWMR. Residues 103 to 113 show a composition bias toward polar residues; the sequence is LPNSTTTTISN. A DNA-binding region (homeobox) is located at residues 137 to 196; it reads SRRLRTAYTNTQLLELEKEFHFNKYLCRPRRVEIAALLDLTERQVKVWFQNRRMKHKRQT.

It belongs to the Antp homeobox family. Proboscipedia subfamily.

It is found in the nucleus. Functionally, sequence-specific transcription factor which is part of a developmental regulatory system that provides cells with specific positional identities on the anterior-posterior axis. This is Homeobox protein Hox-A2a (hoxa2a) from Takifugu rubripes (Japanese pufferfish).